The primary structure comprises 714 residues: Protein ESC8 (714 aa).

Disordered regions lie at residues 598–674 (APTG…ELHN) and 694–714 (RQLQ…RKGL). The segment covering 610–624 (TSSQRRTTVHYSSDV) has biased composition (polar residues). Residues 628 to 650 (VSEESENEVDIDVSDDYDSEYLS) are compositionally biased toward acidic residues. A compositionally biased stretch (basic and acidic residues) spans 654–674 (TLTRKGEDRTDKSFGKRELHN). Residues 704-714 (RSLRRNARKGL) show a composition bias toward basic residues.

In terms of assembly, interacts with GAL11 and SIR2.

It is found in the cytoplasm. The protein resides in the nucleus. Functionally, involved in HMR and telomere silencing via the recruitment or stabilizing of the SIR (silent information regulators) complex. In Saccharomyces cerevisiae (strain ATCC 204508 / S288c) (Baker's yeast), this protein is Protein ESC8 (ESC8).